A 786-amino-acid polypeptide reads, in one-letter code: Protein translocase subunit SecA 1 (786 aa).

ATP contacts are provided by residues Q85, 103 to 107 (GEGKT), and D491.

It belongs to the SecA family. In terms of assembly, monomer and homodimer. Part of the essential Sec protein translocation apparatus which comprises SecA, SecYEG and auxiliary proteins SecDF. Other proteins may also be involved.

Its subcellular location is the cell membrane. The protein resides in the cytoplasm. The catalysed reaction is ATP + H2O + cellular proteinSide 1 = ADP + phosphate + cellular proteinSide 2.. In terms of biological role, part of the Sec protein translocase complex. Interacts with the SecYEG preprotein conducting channel. Has a central role in coupling the hydrolysis of ATP to the transfer of proteins into and across the cell membrane, serving as an ATP-driven molecular motor driving the stepwise translocation of polypeptide chains across the membrane. This Pediococcus pentosaceus (strain ATCC 25745 / CCUG 21536 / LMG 10740 / 183-1w) protein is Protein translocase subunit SecA 1.